Consider the following 171-residue polypeptide: Sorcin (171 aa).

4 EF-hand domains span residues 3 to 38, 40 to 69, 70 to 105, and 106 to 140; these read MDTN…GLGT, LNIR…LGLF, KYVQ…FGYH, and LSPQ…LQTL. Ca(2+) is bound by residues aspartate 16, aspartate 18, serine 20, serine 22, glutamate 27, aspartate 53, aspartate 55, asparagine 57, threonine 59, glutamate 64, aspartate 83, aspartate 85, serine 87, serine 89, and glutamate 94.

It localises to the cytoplasm. Calcium-binding protein. This chain is Sorcin, found in Schistosoma japonicum (Blood fluke).